The following is a 182-amino-acid chain: MSEELIRRYSITGSRRFSNYWWSSVIFLGASGFLLTGLSSYLNVNLLPFIHAENIIFFPQGLVMCFYGILGLIFSVYLGLTIFWSVGSGFNEFNKKDGLVRIFRWGFPGKNRRIDLSYALTDVEAIRVELQEGINPRRTIYLCVKGNREIPVTRIGQPMSLEEVETQAAELAKFLQIDLFLK.

A run of 2 helical transmembrane segments spans residues 22–42 (WSSVIFLGASGFLLTGLSSYL) and 63–83 (VMCFYGILGLIFSVYLGLTIF).

It belongs to the Ycf4 family.

The protein resides in the plastid. The protein localises to the chloroplast thylakoid membrane. In terms of biological role, seems to be required for the assembly of the photosystem I complex. The polypeptide is Photosystem I assembly protein Ycf4 (Oltmannsiellopsis viridis (Marine flagellate)).